The primary structure comprises 72 residues: Translation initiation factor IF-1 (72 aa).

Residues 1-72 (MSKEDLIEFT…SKGRITFRFK (72 aa)) form the S1-like domain.

This sequence belongs to the IF-1 family. Component of the 30S ribosomal translation pre-initiation complex which assembles on the 30S ribosome in the order IF-2 and IF-3, IF-1 and N-formylmethionyl-tRNA(fMet); mRNA recruitment can occur at any time during PIC assembly.

The protein localises to the cytoplasm. In terms of biological role, one of the essential components for the initiation of protein synthesis. Stabilizes the binding of IF-2 and IF-3 on the 30S subunit to which N-formylmethionyl-tRNA(fMet) subsequently binds. Helps modulate mRNA selection, yielding the 30S pre-initiation complex (PIC). Upon addition of the 50S ribosomal subunit IF-1, IF-2 and IF-3 are released leaving the mature 70S translation initiation complex. This chain is Translation initiation factor IF-1, found in Gluconobacter oxydans (strain 621H) (Gluconobacter suboxydans).